A 712-amino-acid chain; its full sequence is Cyclolysin secretion/processing ATP-binding protein CyaB (712 aa).

One can recognise a Peptidase C39 domain in the interval 7–128; it reads QCASVPDSGL…ALWAGELLLC (122 aa). One can recognise an ABC transmembrane type-1 domain in the interval 157-439; the sequence is IGEVLLISLV…LAQLWNDFQQ (283 aa). The next 6 membrane-spanning stretches (helical) occupy residues 160 to 180, 194 to 214, 272 to 292, 298 to 318, 367 to 387, and 390 to 410; these read VLLI…FFQV, LNVI…LTGI, AVTV…MFFY, LVVL…TPVL, VAAG…VTLI, and LVAL…RMTV. In terms of domain architecture, ABC transporter spans 471–706; it reads IELDRVSFRY…GGLYARLQAL (236 aa). 505-512 contacts ATP; the sequence is GRSGSGKS.

This sequence belongs to the ABC transporter superfamily. Cyclolysin exporter (TC 3.A.1.109.2) family.

It localises to the cell membrane. Functionally, involved in the export of calmodulin-sensitive adenylate cyclase-hemolysin (cyclolysin). This Bordetella pertussis (strain Tohama I / ATCC BAA-589 / NCTC 13251) protein is Cyclolysin secretion/processing ATP-binding protein CyaB (cyaB).